The chain runs to 209 residues: FMN-dependent NADH:quinone oxidoreductase (209 aa).

FMN contacts are provided by residues Ser-9 and 15–17 (SNS).

The protein belongs to the azoreductase type 1 family. Homodimer. The cofactor is FMN.

The enzyme catalyses 2 a quinone + NADH + H(+) = 2 a 1,4-benzosemiquinone + NAD(+). The catalysed reaction is N,N-dimethyl-1,4-phenylenediamine + anthranilate + 2 NAD(+) = 2-(4-dimethylaminophenyl)diazenylbenzoate + 2 NADH + 2 H(+). Functionally, quinone reductase that provides resistance to thiol-specific stress caused by electrophilic quinones. Also exhibits azoreductase activity. Catalyzes the reductive cleavage of the azo bond in aromatic azo compounds to the corresponding amines. This chain is FMN-dependent NADH:quinone oxidoreductase, found in Bordetella bronchiseptica (strain ATCC BAA-588 / NCTC 13252 / RB50) (Alcaligenes bronchisepticus).